Reading from the N-terminus, the 371-residue chain is Phospho-N-acetylmuramoyl-pentapeptide-transferase (371 aa).

The next 9 helical transmembrane spans lie at Thr-25–Ala-45, Met-77–Ala-94, Ile-136–Ser-156, Leu-172–Phe-192, Gly-204–Ala-224, Gly-240–Trp-260, Phe-269–Ile-289, Val-296–Phe-316, and Lys-348–Leu-368.

It belongs to the glycosyltransferase 4 family. MraY subfamily. The cofactor is Mg(2+).

The protein localises to the cell inner membrane. It carries out the reaction UDP-N-acetyl-alpha-D-muramoyl-L-alanyl-gamma-D-glutamyl-meso-2,6-diaminopimeloyl-D-alanyl-D-alanine + di-trans,octa-cis-undecaprenyl phosphate = di-trans,octa-cis-undecaprenyl diphospho-N-acetyl-alpha-D-muramoyl-L-alanyl-D-glutamyl-meso-2,6-diaminopimeloyl-D-alanyl-D-alanine + UMP. It functions in the pathway cell wall biogenesis; peptidoglycan biosynthesis. In terms of biological role, catalyzes the initial step of the lipid cycle reactions in the biosynthesis of the cell wall peptidoglycan: transfers peptidoglycan precursor phospho-MurNAc-pentapeptide from UDP-MurNAc-pentapeptide onto the lipid carrier undecaprenyl phosphate, yielding undecaprenyl-pyrophosphoryl-MurNAc-pentapeptide, known as lipid I. The protein is Phospho-N-acetylmuramoyl-pentapeptide-transferase of Opitutus terrae (strain DSM 11246 / JCM 15787 / PB90-1).